The following is a 338-amino-acid chain: Lipoate-protein ligase A (338 aa).

The region spanning 29–216 (PATQRVLFLW…AFFAHYGERV (188 aa)) is the BPL/LPL catalytic domain. Residues Arg-71, 76–79 (GAVF), and Lys-134 each bind ATP. Residue Lys-134 coordinates (R)-lipoate.

Belongs to the LplA family. Monomer.

It localises to the cytoplasm. It catalyses the reaction L-lysyl-[lipoyl-carrier protein] + (R)-lipoate + ATP = N(6)-[(R)-lipoyl]-L-lysyl-[lipoyl-carrier protein] + AMP + diphosphate + H(+). It functions in the pathway protein modification; protein lipoylation via exogenous pathway; protein N(6)-(lipoyl)lysine from lipoate: step 1/2. Its pathway is protein modification; protein lipoylation via exogenous pathway; protein N(6)-(lipoyl)lysine from lipoate: step 2/2. In terms of biological role, catalyzes both the ATP-dependent activation of exogenously supplied lipoate to lipoyl-AMP and the transfer of the activated lipoyl onto the lipoyl domains of lipoate-dependent enzymes. This is Lipoate-protein ligase A from Escherichia coli O139:H28 (strain E24377A / ETEC).